The sequence spans 980 residues: MMKPSIAEMLHRGRMLWIILLSTIALGWTTPIPLIEDSEEIDEPCFDPCYCEVKESLFHIHCDSKGFTNISQITEFWSRPFKLYLQRNSMRRLYTNSFLHLNNAVSINLGNNALQDIQTGAFNGLKILKRLYLHENKLDVFRNDTFLGLESLEYLQADYNVIKRIESGAFRNLSKLRVLILNDNLIPVLPTNLFKAVSLTHLDLRGNRLKVLFYRGMLDHIGRSLMELQLEENPWNCTCEIVQLKSWLERIPYTALVGDITCETPFHFHGKDLREIKKTELCPLLSDSEVEASLGIPHLSSSKENAWPTKPSSMLSSVHFTASSVEYKSSNKQPKPTKQPRTPRPPSTSQALYPGPNQPPIAPYQTRPPIPIICPTGCTCNLHINDLGLTVNCKERGFNNISELLPRPLNAKKLYLSSNLIQKIYRSDFWNFSSLDLLHLGNNRISYVQDGAFINLPNLKSLFLNGNDIEKLTPGMFRGLQSLHYLYFEFNVIREIQPAAFSLMPNLKLLFLNNNLLRTLPTDAFAGTSLARLNLRKNYFLYLPVAGVLEHLNAIVQIDLNENPWDCTCDLVPFKQWIETISSVSVVGDVLCRTPENLTHRDVRTIELEVLCPEMLHIAQPGPSPPQPGDYHPNGGPTSASPYEFSPPGGPVPLSVLILSLLVLFFSAVFVAAGLFAYVLRRRRKKLPFRSKRQEGVDLTGIQMQCHRLFEDSGGNSGGSGGGGRPTLSSPEKAPPVGHVYEYIPHPVTQMCNNPIYKPREEEEVAASAAQDTGATDRGGPGTQPTGMAEVLLGSEQFAETPKENHSNYRTLLEKEKEWALAVSNSQLNTIVTVNHHHPHPHHSAVGGVSGVGGGTGGDLAGFRHHEKNGGVVLFPPGGGCGGGSLLLDRERPQPAPCTVGFVDCLYGTVPKLKELHVHPPGMQYPDLQQDARLKETLLFSAGKGFTDHQTPKSDYLDLRAKLQTKPDYLEVLEKTAYRF.

The signal sequence occupies residues 1–27 (MMKPSIAEMLHRGRMLWIILLSTIALG). At 30–655 (TPIPLIEDSE…SPPGGPVPLS (626 aa)) the chain is on the extracellular side. N69 carries N-linked (GlcNAc...) asparagine glycosylation. LRR repeat units follow at residues 79–100 (RPFK…SFLH), 103–124 (NAVS…AFNG), 127–148 (ILKR…TFLG), 151–172 (SLEY…AFRN), 175–196 (KLRV…LFKA), and 198–219 (SLTH…GMLD). The region spanning 233–284 (NPWNCTCEIVQLKSWLERIPYTALVGDITCETPFHFHGKDLREIKKTELCPL) is the LRRCT 1 domain. The disordered stretch occupies residues 326 to 361 (EYKSSNKQPKPTKQPRTPRPPSTSQALYPGPNQPPI). In terms of domain architecture, LRRNT spans 365–407 (QTRPPIPIICPTGCTCNLHINDLGLTVNCKERGFNNISELLPR). LRR repeat units lie at residues 410 to 431 (NAKK…DFWN), 434 to 455 (SLDL…AFIN), 458 to 479 (NLKS…MFRG), 482 to 503 (SLHY…AFSL), 506 to 527 (NLKL…AFAG), and 529 to 550 (SLAR…GVLE). The 52-residue stretch at 563 to 614 (NPWDCTCDLVPFKQWIETISSVSVVGDVLCRTPENLTHRDVRTIELEVLCPE) folds into the LRRCT 2 domain. N597 is a glycosylation site (N-linked (GlcNAc...) asparagine). The disordered stretch occupies residues 622-644 (GPSPPQPGDYHPNGGPTSASPYE). Residues 656–676 (VLILSLLVLFFSAVFVAAGLF) form a helical membrane-spanning segment. At 677–980 (AYVLRRRRKK…EVLEKTAYRF (304 aa)) the chain is on the cytoplasmic side. 2 disordered regions span residues 709 to 735 (LFED…EKAP) and 762 to 785 (EEEV…GTQP). Residues 715–725 (GNSGGSGGGGR) are compositionally biased toward gly residues.

Belongs to the SLITRK family. In terms of tissue distribution, broadly expressed in embryonic brain with highest expression in cortical plate, pyramidal cell layer of the hippocampus, thalamus and hypothalamus.

It localises to the membrane. Functionally, suppresses neurite outgrowth. This is SLIT and NTRK-like protein 3 (Slitrk3) from Mus musculus (Mouse).